Here is a 1295-residue protein sequence, read N- to C-terminus: Phosphoribosylformylglycinamidine synthase (1295 aa).

Positions 305–327 are disordered; it reads WPGAATGSGGEIRDEGATGRGAK. ATP contacts are provided by residues 307-318, 386-388, and A678; these read GAATGSGGEIRD and TGY. Residues D679, E718, N722, and D884 each contribute to the Mg(2+) site. S886 provides a ligand contact to ATP. In terms of domain architecture, Glutamine amidotransferase type-1 spans 1041-1295; that stretch reads KVAVLREQGG…IFRNARKQLG (255 aa). C1135 serves as the catalytic Nucleophile. Residues H1260 and E1262 contribute to the active site.

It in the N-terminal section; belongs to the FGAMS family. As to quaternary structure, monomer.

The protein resides in the cytoplasm. It carries out the reaction N(2)-formyl-N(1)-(5-phospho-beta-D-ribosyl)glycinamide + L-glutamine + ATP + H2O = 2-formamido-N(1)-(5-O-phospho-beta-D-ribosyl)acetamidine + L-glutamate + ADP + phosphate + H(+). The protein operates within purine metabolism; IMP biosynthesis via de novo pathway; 5-amino-1-(5-phospho-D-ribosyl)imidazole from N(2)-formyl-N(1)-(5-phospho-D-ribosyl)glycinamide: step 1/2. In terms of biological role, phosphoribosylformylglycinamidine synthase involved in the purines biosynthetic pathway. Catalyzes the ATP-dependent conversion of formylglycinamide ribonucleotide (FGAR) and glutamine to yield formylglycinamidine ribonucleotide (FGAM) and glutamate. This is Phosphoribosylformylglycinamidine synthase from Salmonella choleraesuis (strain SC-B67).